The primary structure comprises 91 residues: Elongation factor 1-beta (91 aa).

This sequence belongs to the EF-1-beta/EF-1-delta family.

Promotes the exchange of GDP for GTP in EF-1-alpha/GDP, thus allowing the regeneration of EF-1-alpha/GTP that could then be used to form the ternary complex EF-1-alpha/GTP/AAtRNA. The polypeptide is Elongation factor 1-beta (Thermofilum pendens (strain DSM 2475 / Hrk 5)).